The primary structure comprises 215 residues: Adenylate kinase (215 aa).

10-15 (GAGKGT) is a binding site for ATP. The NMP stretch occupies residues 30-59 (STGDLLRAAVAAGTPLGKEAKAYMDRGELV). AMP is bound by residues Thr-31, Arg-36, 57–59 (ELV), 85–88 (GFPR), and Gln-92. An LID region spans residues 126–163 (GRRTCKSCGQMYNVYYSPSKVEGKCDKCGGELFQRDDD). Arg-127 contributes to the ATP binding site. 4 residues coordinate Zn(2+): Cys-130, Cys-133, Cys-150, and Cys-153. Positions 160 and 171 each coordinate AMP. Gly-199 is a binding site for ATP.

This sequence belongs to the adenylate kinase family. In terms of assembly, monomer.

It is found in the cytoplasm. The enzyme catalyses AMP + ATP = 2 ADP. It functions in the pathway purine metabolism; AMP biosynthesis via salvage pathway; AMP from ADP: step 1/1. In terms of biological role, catalyzes the reversible transfer of the terminal phosphate group between ATP and AMP. Plays an important role in cellular energy homeostasis and in adenine nucleotide metabolism. The polypeptide is Adenylate kinase (Thermodesulfovibrio yellowstonii (strain ATCC 51303 / DSM 11347 / YP87)).